A 135-amino-acid polypeptide reads, in one-letter code: Small ribosomal subunit protein bS16 (135 aa).

Residues 82–135 are disordered; it reads RPAETVGKAKQAAKREADAKQAAKEAAEAKAAAADEKAAEAEASDSAESESTEG. The span at 94–121 shows a compositional bias: basic and acidic residues; the sequence is AKREADAKQAAKEAAEAKAAAADEKAAE. The span at 123 to 135 shows a compositional bias: acidic residues; sequence EASDSAESESTEG.

The protein belongs to the bacterial ribosomal protein bS16 family.

The chain is Small ribosomal subunit protein bS16 from Synechococcus sp. (strain CC9605).